The chain runs to 394 residues: Elongation factor Tu (394 aa).

The tr-type G domain maps to 10–204 (KPHVNVGTIG…ALDTYIPEPE (195 aa)). Positions 19-26 (GHVDHGKT) are G1. 19-26 (GHVDHGKT) contacts GTP. T26 contributes to the Mg(2+) binding site. The tract at residues 60–64 (GITIN) is G2. Residues 81–84 (DCPG) form a G3 region. GTP is bound by residues 81 to 85 (DCPGH) and 136 to 139 (NKCD). The segment at 136-139 (NKCD) is G4. Residues 174–176 (SAL) are G5.

It belongs to the TRAFAC class translation factor GTPase superfamily. Classic translation factor GTPase family. EF-Tu/EF-1A subfamily. As to quaternary structure, monomer.

Its subcellular location is the cytoplasm. It catalyses the reaction GTP + H2O = GDP + phosphate + H(+). GTP hydrolase that promotes the GTP-dependent binding of aminoacyl-tRNA to the A-site of ribosomes during protein biosynthesis. The protein is Elongation factor Tu of Shewanella denitrificans (strain OS217 / ATCC BAA-1090 / DSM 15013).